Reading from the N-terminus, the 660-residue chain is Interferon-induced GTP-binding protein Mx1 (660 aa).

Position 1 is an N-acetylmethionine (Met-1). Residues 1-10 (MVHSEAKMTR) show a composition bias toward basic and acidic residues. The disordered stretch occupies residues 1 to 29 (MVHSEAKMTRPDSASASKQQLLNGNADIQ). A compositionally biased stretch (polar residues) spans 12 to 29 (DSASASKQQLLNGNADIQ). A Dynamin-type G domain is found at 67–340 (DLALPAIAVI…LITHISKSLP (274 aa)). The segment at 77-84 (GDQSSGKS) is G1 motif. 77–84 (GDQSSGKS) provides a ligand contact to GTP. Residues 102 to 104 (VTR) form a G2 motif region. Positions 178–181 (DLPG) are G3 motif. GTP contacts are provided by residues 178-182 (DLPGI) and 247-250 (TKPD). Residues 247-250 (TKPD) form a G4 motif region. Residues 279 to 282 (KCRG) form a G5 motif region. The bundle signaling element (BSE) stretch occupies residues 341 to 366 (LLENQIKESYQNLSDELQKYGTDIPE). The interval 366 to 533 (EDETEKTFFL…HFQMEKIVYC (168 aa)) is middle domain. The interval 367–630 (DETEKTFFLI…RDTYDWLLKE (264 aa)) is stalk. Residues 554–557 (KKKK) form a critical for lipid-binding region. The GED domain occupies 572 to 660 (MAEILEHLNA…ARRRLAKFPG (89 aa)).

This sequence belongs to the TRAFAC class dynamin-like GTPase superfamily. Dynamin/Fzo/YdjA family. Homooligomer. Oligomerizes into multimeric filamentous or ring-like structures by virtue of its stalk domain. Oligomerization is critical for GTPase activity, protein stability, and recognition of viral target structures. Interacts with TRPC1, TRPC3, TRPC4, TRPC5, TRPC6 and TRPC7. Interacts with HSPA5. Interacts with TUBB/TUBB5. Interacts with DDX39A and DDX39B. In terms of processing, ISGylated.

It is found in the cytoplasm. It localises to the endoplasmic reticulum membrane. The protein resides in the perinuclear region. Interferon-induced dynamin-like GTPase with antiviral activity. This Equus caballus (Horse) protein is Interferon-induced GTP-binding protein Mx1 (MX1).